The chain runs to 507 residues: Maturase K (507 aa).

The protein belongs to the intron maturase 2 family. MatK subfamily.

The protein resides in the plastid. Its subcellular location is the chloroplast. Usually encoded in the trnK tRNA gene intron. Probably assists in splicing its own and other chloroplast group II introns. The chain is Maturase K from Buxus microphylla (Littleleaf boxwood).